We begin with the raw amino-acid sequence, 231 residues long: MEDSTSPKVTLYTYFRSSCSARLRIALNLKSIPYTPIAVNLLKGEQSSPENIALNPSGTVPTLIVEHDSKEPVTITQSLAALEYLEEITPASSHALLPPASNPEARAVVRTLVDIMSCDVQPVTNLRILKRVAPFGVDRAAWSKDLIEDGFRAYEAIAAKSAGLFSVGDSITMADVCLLPAVWGAERAGVKVEKFPTIYRVAQRLEEEDAVKRAHWRTQPDTPEEFRVSSS.

Positions 7–93 (PKVTLYTYFR…YLEEITPASS (87 aa)) constitute a GST N-terminal domain. One can recognise a GST C-terminal domain in the interval 102–224 (NPEARAVVRT…HWRTQPDTPE (123 aa)).

Belongs to the GST superfamily. Zeta family.

It carries out the reaction 4-maleylacetoacetate = 4-fumarylacetoacetate. It participates in amino-acid degradation; L-phenylalanine degradation; acetoacetate and fumarate from L-phenylalanine: step 5/6. In terms of biological role, maleylacetoacetate isomerase; part of the L-tyrosine degradation gene cluster that mediates the biosynthesis of the brownish pigment pyomelanin as an alternative melanin. The 4-hydroxyphenylpyruvate dioxygenase hppD catalyzes the conversion of 4-hydroxyphenylpyruvate to homogentisic acid (HGA). The protein hmgX is crucial for this conversion and thus, probably functions as an accessory factor to mediate specific activity of hppD. The homogentisate 1,2-dioxygenase hmgA is then involved in the cleavage of the aromatic ring of HGA and its conversion to 4-maleylacetoacetate. When hmgA activity is lowered by the cell wall integrity (CWI) signaling pathway, HGA accumulates and leads to the production of pyomelanin through benzoquinone acetic acid after oxidation and polymerization. On the opposite, in non-stress conditions, both hppD and hmgA activities are balanced and HGA is degraded into 4-maleylacetoacetate. 4-maleylacetoacetate is further converted to 4-fumarylacetoacetate by the maleylacetoacetate isomerase maiA, which is degraded into fumarate and acetoacetate by the fumarylacetoacetase fahA. In Aspergillus fumigatus (strain ATCC MYA-4609 / CBS 101355 / FGSC A1100 / Af293) (Neosartorya fumigata), this protein is Maleylacetoacetate isomerase maiA.